Reading from the N-terminus, the 198-residue chain is Probable nicotinate-nucleotide adenylyltransferase (198 aa).

Belongs to the NadD family.

It carries out the reaction nicotinate beta-D-ribonucleotide + ATP + H(+) = deamido-NAD(+) + diphosphate. Its pathway is cofactor biosynthesis; NAD(+) biosynthesis; deamido-NAD(+) from nicotinate D-ribonucleotide: step 1/1. Its function is as follows. Catalyzes the reversible adenylation of nicotinate mononucleotide (NaMN) to nicotinic acid adenine dinucleotide (NaAD). In Chlorobium phaeobacteroides (strain BS1), this protein is Probable nicotinate-nucleotide adenylyltransferase.